Here is a 226-residue protein sequence, read N- to C-terminus: Ribonuclease 3 (226 aa).

In terms of domain architecture, RNase III spans 6 to 128 (INRLQRKLGY…LIGGVFLDSD (123 aa)). Glutamate 41 lines the Mg(2+) pocket. Aspartate 45 is an active-site residue. Positions 114 and 117 each coordinate Mg(2+). Glutamate 117 is an active-site residue. Positions 155-225 (DPKTRLQEYL…AEQALKMLEL (71 aa)) constitute a DRBM domain.

It belongs to the ribonuclease III family. In terms of assembly, homodimer. Requires Mg(2+) as cofactor.

The protein resides in the cytoplasm. The enzyme catalyses Endonucleolytic cleavage to 5'-phosphomonoester.. Functionally, digests double-stranded RNA. Involved in the processing of primary rRNA transcript to yield the immediate precursors to the large and small rRNAs (23S and 16S). Processes some mRNAs, and tRNAs when they are encoded in the rRNA operon. Processes pre-crRNA and tracrRNA of type II CRISPR loci if present in the organism. This chain is Ribonuclease 3, found in Enterobacter sp. (strain 638).